Reading from the N-terminus, the 166-residue chain is 3-hydroxyacyl-[acyl-carrier-protein] dehydratase FabZ (166 aa).

H72 is a catalytic residue.

The protein belongs to the thioester dehydratase family. FabZ subfamily.

It is found in the cytoplasm. The enzyme catalyses a (3R)-hydroxyacyl-[ACP] = a (2E)-enoyl-[ACP] + H2O. In terms of biological role, involved in unsaturated fatty acids biosynthesis. Catalyzes the dehydration of short chain beta-hydroxyacyl-ACPs and long chain saturated and unsaturated beta-hydroxyacyl-ACPs. In Synechococcus sp. (strain JA-3-3Ab) (Cyanobacteria bacterium Yellowstone A-Prime), this protein is 3-hydroxyacyl-[acyl-carrier-protein] dehydratase FabZ.